Reading from the N-terminus, the 484-residue chain is UDP-N-acetylmuramoyl-L-alanyl-D-glutamate--L-lysine ligase (484 aa).

Residue S43 participates in UDP-N-acetyl-alpha-D-muramoyl-L-alanyl-D-glutamate binding. 119-125 (GTKGKTT) serves as a coordination point for ATP. Residues 161–162 (TT), S188, and R196 contribute to the UDP-N-acetyl-alpha-D-muramoyl-L-alanyl-D-glutamate site. K230 is modified (N6-carboxylysine). Residues 405 to 408 (DDPN) carry the L-lysine recognition motif motif.

The protein belongs to the MurCDEF family. MurE subfamily. Carboxylation is probably crucial for Mg(2+) binding and, consequently, for the gamma-phosphate positioning of ATP.

The protein localises to the cytoplasm. It catalyses the reaction UDP-N-acetyl-alpha-D-muramoyl-L-alanyl-D-glutamate + L-lysine + ATP = UDP-N-acetyl-alpha-D-muramoyl-L-alanyl-gamma-D-glutamyl-L-lysine + ADP + phosphate + H(+). It functions in the pathway cell wall biogenesis; peptidoglycan biosynthesis. Its function is as follows. Catalyzes the addition of L-lysine to the nucleotide precursor UDP-N-acetylmuramoyl-L-alanyl-D-glutamate (UMAG) in the biosynthesis of bacterial cell-wall peptidoglycan. The chain is UDP-N-acetylmuramoyl-L-alanyl-D-glutamate--L-lysine ligase from Streptococcus agalactiae serotype III (strain NEM316).